The chain runs to 107 residues: Iron-binding protein IscA (107 aa).

Fe cation-binding residues include C35, C99, and C101.

The protein belongs to the HesB/IscA family. As to quaternary structure, homodimer; may form tetramers and higher multimers. Fe cation serves as cofactor.

Functionally, is able to transfer iron-sulfur clusters to apo-ferredoxin. Multiple cycles of [2Fe2S] cluster formation and transfer are observed, suggesting that IscA acts catalytically. Recruits intracellular free iron so as to provide iron for the assembly of transient iron-sulfur cluster in IscU in the presence of IscS, L-cysteine and the thioredoxin reductase system TrxA/TrxB. The polypeptide is Iron-binding protein IscA (Klebsiella pneumoniae (strain 342)).